Consider the following 154-residue polypeptide: N-acetylneuraminate anomerase NanQ (154 aa).

Belongs to the NanQ anomerase family. The cofactor is Zn(2+).

The protein resides in the cytoplasm. It catalyses the reaction N-acetyl-alpha-neuraminate = aceneuramate. The enzyme catalyses N-acetyl-beta-neuraminate = aceneuramate. Inhibited by 1,10-phenanthroline. Opens both the alpha- and beta-forms of N-acetylneuraminate (sialic acid; Neu5Ac) to provide aceneuramate, the preferred substrate for NanA. Has preferential activity on the beta-anomer rather than the alpha-anomer. Accelerates a reaction that is spontaneous at slightly alkaline pH, facilitates the reaction at acidic pH. The chain is N-acetylneuraminate anomerase NanQ from Escherichia coli (strain K12).